The sequence spans 553 residues: Protein PNS1 (553 aa).

Over residues 1-17 (MYGKSGPPPEGYVPQHP) the composition is skewed to pro residues. A disordered region spans residues 1-49 (MYGKSGPPPEGYVPQHPPAQGYAPHNPPPGYVHENPFQEPVPQGQEYSP). At 1–95 (MYGKSGPPPE…AGNRLKFNDW (95 aa)) the chain is on the cytoplasmic side. The helical transmembrane segment at 96–116 (PFTIIFLLTVGAFIAVAVLTL) threads the bilayer. Topologically, residues 117-143 (RGWSLSPTSNGSGIYDGDNTHTLNTNA) are extracellular. N126 carries an N-linked (GlcNAc...) asparagine glycan. Residues 144–164 (AILLLISCGVAVALSVFGLVL) traverse the membrane as a helical segment. The Cytoplasmic segment spans residues 165–170 (AGMYTK). A helical membrane pass occupies residues 171-191 (FFIYAAMILNTVVGLGTAITY). Residues 192-196 (LVLRH) are Extracellular-facing. A helical membrane pass occupies residues 197–217 (WSAGIVFMIFTILTAVCYWLM). At 218–243 (RSRIPFSVAVLRTVMSVMKKHPQTWL) the chain is on the cytoplasmic side. A helical transmembrane segment spans residues 244 to 264 (VSLLGTIVSAAFSVIFSVVLV). The Extracellular portion of the chain corresponds to 265–288 (ATYIKYDPKSENGGCDVSGGSCSR). A helical membrane pass occupies residues 289–309 (GKLIGILVLVFFCGFYISEVI). At 310 to 346 (RNVIHCTIAGIYGCWYYFSKSDQGMPRWPAFGSLKRA) the chain is on the cytoplasmic side. Residues 347–367 (LTTSFGSICFGSLIVSLIQLL) traverse the membrane as a helical segment. The Extracellular segment spans residues 368–385 (RQIIQLLRNGIISGISDS). Residues 386-406 (GWMQCLWLILDAVVGVFEWMA) form a helical membrane-spanning segment. Over 407 to 450 (EYFNHYAYCFIALYGKPYLRAAKETWHMLREKGIDALINDNLIN) the chain is Cytoplasmic. Residues 451 to 471 (LALGFYTLFVGYTTALFSYLF) traverse the membrane as a helical segment. Topologically, residues 472-483 (LRFTKPDYNSGG) are extracellular. Residues 484-504 (GFNAVLMAFSFLIAIQLTHVA) traverse the membrane as a helical segment. Topologically, residues 505-553 (TETIRSGTATFFVALGNDPEIFRVSYPQRFDEIFRAYPDVLNKLSHQHV) are cytoplasmic.

This sequence belongs to the CTL (choline transporter-like) family.

It localises to the cell membrane. Functionally, probably involved in transport through the plasma membrane. The sequence is that of Protein PNS1 (PNS1) from Eremothecium gossypii (strain ATCC 10895 / CBS 109.51 / FGSC 9923 / NRRL Y-1056) (Yeast).